The primary structure comprises 587 residues: Transport inhibitor response 1-like protein Os05g0150500 (587 aa).

Residues 6 to 63 (SRAACAAAAPPWHSLPDEVWEHAFSFLPAAADRGAAAGACSSWLRAERRSRRRLAVAN) form the F-box domain. Lysine 85 serves as a coordination point for 1D-myo-inositol hexakisphosphate. The tract at residues 92-93 (DF) is interaction with auxin-responsive proteins. 1D-myo-inositol hexakisphosphate is bound by residues 124 to 125 (KR) and arginine 355. Residues 358–363 (PSDPFG) form an interaction with auxin-responsive proteins region. 409–411 (CFR) is a binding site for 1D-myo-inositol hexakisphosphate. Residues 413–417 (CILEP) form an interaction with auxin-responsive proteins region. Arginine 444 contacts 1D-myo-inositol hexakisphosphate. Residues 472–473 (AF) are interaction with auxin-responsive proteins. 1D-myo-inositol hexakisphosphate is bound by residues 492–493 (KK) and arginine 517.

In terms of assembly, part of a SCF (SKP1-cullin-F-box) protein ligase complex. May interact with auxin and auxin-responsive proteins.

The protein localises to the nucleus. It functions in the pathway protein modification; protein ubiquitination. The chain is Transport inhibitor response 1-like protein Os05g0150500 from Oryza sativa subsp. japonica (Rice).